The primary structure comprises 143 residues: Transcriptional regulator MraZ (143 aa).

2 SpoVT-AbrB domains span residues 5-47 (EYSH…PMPV) and 76-119 (AMEA…SDEN).

Belongs to the MraZ family. As to quaternary structure, forms oligomers.

The protein localises to the cytoplasm. The protein resides in the nucleoid. This is Transcriptional regulator MraZ from Leuconostoc citreum (strain KM20).